The primary structure comprises 952 residues: Inactive atromentin synthetase invA6 (952 aa).

Residues 58-462 (DSSVQTRSFS…NGRIKDTVIV (405 aa)) are adenylation (A) domain. One can recognise a Carrier domain in the interval 594 to 672 (APSTETEKTL…SLAKYVDSLV (79 aa)). The thiolation and peptide carrier (T) domain stretch occupies residues 599–669 (TEKTLGRLYA…VISSLAKYVD (71 aa)). The residue at position 631 (Ser-631) is an O-(pantetheine 4'-phosphoryl)serine. A thioesterase (TE) domain region spans residues 695–939 (PIFMVHPGIG…LMDFDHVSGF (245 aa)).

Belongs to the ATP-dependent AMP-binding enzyme family.

Inactive atromentin synthetase homolog. Does not accept 4-hydroxyphenylpyruvate (4-HPP) as substrate. Both the adenylation (A) and the thioesterase (TE) domain of the invA6 enzyme are inactive. The protein is Inactive atromentin synthetase invA6 (invA6) of Paxillus involutus (Naked brimcap).